A 638-amino-acid chain; its full sequence is Signal recognition particle receptor subunit alpha (638 aa).

3 disordered regions span residues 129–205 (KIRA…VELS), 218–245 (IQKH…KKAP), and 262–315 (SAPT…ATKG). 2 stretches are compositionally biased toward basic and acidic residues: residues 137–146 (KKFEDSEKAK) and 153–165 (IETR…EKAK). At S177 the chain carries Phosphoserine. The span at 218-239 (IQKHGRGLEKSSKSTKSDAPKE) shows a compositional bias: basic and acidic residues. T284 carries the phosphothreonine modification. Residues S296, S297, and S298 each carry the phosphoserine modification. The segment covering 304 to 314 (AQNASKPSATK) has biased composition (polar residues). The segment at 419–636 (YVVTFCGVNG…NAKAVVAALM (218 aa)) is NG domain. Residue 425–432 (GVNGVGKS) coordinates GTP. Phosphoserine is present on S473. Residue 520 to 524 (DTAGR) coordinates GTP. At T578 the chain carries Phosphothreonine. GTP is bound at residue 588 to 591 (TKFD).

Belongs to the GTP-binding SRP family. Heterodimer with SRPRB. Interacts with the signal recognition particle (SRP) complex subunit SRP54.

Its subcellular location is the endoplasmic reticulum membrane. Its function is as follows. Component of the SRP (signal recognition particle) receptor. Ensures, in conjunction with the signal recognition particle, the correct targeting of the nascent secretory proteins to the endoplasmic reticulum membrane system. Forms a guanosine 5'-triphosphate (GTP)-dependent complex with the SRP subunit SRP54. SRP receptor compaction and GTPase rearrangement drive SRP-mediated cotranslational protein translocation into the ER. The protein is Signal recognition particle receptor subunit alpha of Canis lupus familiaris (Dog).